A 146-amino-acid chain; its full sequence is UPF0260 protein Spea_2441 (146 aa).

It belongs to the UPF0260 family.

In Shewanella pealeana (strain ATCC 700345 / ANG-SQ1), this protein is UPF0260 protein Spea_2441.